Consider the following 251-residue polypeptide: Duodenase-1 (251 aa).

The first 17 residues, 1 to 17, serve as a signal peptide directing secretion; sequence MVLLLLLVALLSPTGEA. A propeptide spanning residues 18–19 is cleaved from the precursor; that stretch reads GK. Residues 20–242 enclose the Peptidase S1 domain; that stretch reads IIGGHEAKPH…SFLSWIHSTM (223 aa). Residues cysteine 48 and cysteine 64 are joined by a disulfide bond. Catalysis depends on histidine 63, which acts as the Charge relay system. Asparagine 70 carries an N-linked (GlcNAc...) asparagine glycan. The active-site Charge relay system is aspartate 107. 2 cysteine pairs are disulfide-bonded: cysteine 141–cysteine 207 and cysteine 172–cysteine 186. The active-site Charge relay system is serine 201.

The protein belongs to the peptidase S1 family. As to quaternary structure, monomer.

In terms of biological role, protease which has both trypsin-like and chymotrypsin-like activities. Shows a preferential cleavage after Lys, Arg, Tyr, Phe, and Leu residues. The sequence is that of Duodenase-1 (BDMD1) from Bos taurus (Bovine).